Consider the following 186-residue polypeptide: Coiled-coil domain-containing protein ORF13 (186 aa).

Coiled coils occupy residues 2–30 and 63–85; these read GIKEKEIELETLKREIAQAEASLEQDFIK and LREKLTDKVSKAMDLSDEIQRDK.

The polypeptide is Coiled-coil domain-containing protein ORF13 (Helicobacter pylori (strain 35A)).